A 395-amino-acid chain; its full sequence is S-adenosylmethionine synthase (395 aa).

Histidine 16 contributes to the ATP binding site. Aspartate 18 provides a ligand contact to Mg(2+). Glutamate 44 lines the K(+) pocket. 2 residues coordinate L-methionine: glutamate 57 and glutamine 100. A flexible loop region spans residues 100-110 (QSPDIAQGVDR). Residues 167–169 (DAK), 233–234 (RF), aspartate 242, 248–249 (RK), alanine 265, and lysine 269 each bind ATP. An L-methionine-binding site is contributed by aspartate 242. Lysine 273 serves as a coordination point for L-methionine.

Belongs to the AdoMet synthase family. As to quaternary structure, homotetramer; dimer of dimers. Mg(2+) serves as cofactor. K(+) is required as a cofactor.

The protein resides in the cytoplasm. It catalyses the reaction L-methionine + ATP + H2O = S-adenosyl-L-methionine + phosphate + diphosphate. The protein operates within amino-acid biosynthesis; S-adenosyl-L-methionine biosynthesis; S-adenosyl-L-methionine from L-methionine: step 1/1. Catalyzes the formation of S-adenosylmethionine (AdoMet) from methionine and ATP. The overall synthetic reaction is composed of two sequential steps, AdoMet formation and the subsequent tripolyphosphate hydrolysis which occurs prior to release of AdoMet from the enzyme. The polypeptide is S-adenosylmethionine synthase (Burkholderia thailandensis (strain ATCC 700388 / DSM 13276 / CCUG 48851 / CIP 106301 / E264)).